A 351-amino-acid polypeptide reads, in one-letter code: Formyl peptide receptor 2 (351 aa).

At 1 to 29 (MESNYSIHLNGSEVVVYDSTISRVLWILS) the chain is on the extracellular side. Residues N4 and N10 are each glycosylated (N-linked (GlcNAc...) asparagine). Residues 30–50 (MVVVSITFFLGVLGNGLVIWV) form a helical membrane-spanning segment. The Cytoplasmic portion of the chain corresponds to 51 to 61 (AGFRMPHTVTT). Residues 62-82 (IWYLNLALADFSFTATLPFLL) form a helical membrane-spanning segment. Residues 83–99 (VEMAMKEKWPFGWFLCK) lie on the Extracellular side of the membrane. An intrachain disulfide couples C98 to C176. Residues 100–120 (LVHIVVDVNLFGSVFLIALIA) traverse the membrane as a helical segment. Topologically, residues 121–144 (LDRCICVLHPVWAQNHRTVSLARK) are cytoplasmic. Residues 145 to 165 (VVVGPWIFALILTLPIFIFLT) form a helical membrane-spanning segment. The Extracellular portion of the chain corresponds to 166–205 (TVRIPGGDVYCTFNFGSWAQTDEEKLNTAITFVTTRGIIR). The chain crosses the membrane as a helical span at residues 206–226 (FLIGFSMPMSIVAVCYGLIAV). At 227-241 (KINRRNLVNSSRPLR) the chain is on the cytoplasmic side. Residues 242-262 (VLTAVVASFFICWFPFQLVAL) traverse the membrane as a helical segment. The Extracellular segment spans residues 263 to 282 (LGTVWFKETLLSGSYKILDM). The helical transmembrane segment at 283 to 305 (FVNPTSSLAYFNSCLNPMLYVFM) threads the bilayer. Residues 306–351 (GQDFRERFIHSLPYSLERALSEDSGQTSDSSTSSTSPPADIELKAP) lie on the Cytoplasmic side of the membrane. The interval 325-351 (LSEDSGQTSDSSTSSTSPPADIELKAP) is disordered. Residues 327 to 341 (EDSGQTSDSSTSSTS) are compositionally biased toward low complexity.

It belongs to the G-protein coupled receptor 1 family. Interacts with Amyloid-beta protein 42, product of APP; the interaction takes place at the cell surface and the complex is then rapidly internalized. As to expression, primarily expressed in neutrophils. Not detected in vomeronasal neurons.

It is found in the cell membrane. In terms of biological role, high affinity receptor for N-formyl-methionyl peptides (FMLP), which are powerful neutrophil chemotactic factors. Stimulates chemotaxis in immune cells to site of infection or tissue damage upon recognition of several ligands, such as FMLP, or ligand involved in cell damage, disease or inflammation. Receptor for the chemokine-like protein FAM19A5, mediating FAM19A5-stimulated macrophage chemotaxis and the inhibitory effect on TNFSF11/RANKL-induced osteoclast differentiation. The sequence is that of Formyl peptide receptor 2 (Fpr2) from Mus musculus (Mouse).